Reading from the N-terminus, the 171-residue chain is S-ribosylhomocysteine lyase (171 aa).

3 residues coordinate Fe cation: histidine 54, histidine 58, and cysteine 128.

The protein belongs to the LuxS family. As to quaternary structure, homodimer. Fe cation serves as cofactor.

The enzyme catalyses S-(5-deoxy-D-ribos-5-yl)-L-homocysteine = (S)-4,5-dihydroxypentane-2,3-dione + L-homocysteine. In terms of biological role, involved in the synthesis of autoinducer 2 (AI-2) which is secreted by bacteria and is used to communicate both the cell density and the metabolic potential of the environment. The regulation of gene expression in response to changes in cell density is called quorum sensing. Catalyzes the transformation of S-ribosylhomocysteine (RHC) to homocysteine (HC) and 4,5-dihydroxy-2,3-pentadione (DPD). The chain is S-ribosylhomocysteine lyase from Yersinia enterocolitica serotype O:8 / biotype 1B (strain NCTC 13174 / 8081).